Reading from the N-terminus, the 485-residue chain is Pelle-like serine/threonine-protein kinase pik-1 (485 aa).

Residues 115-132 (TSRVSKQMVQPPGSQSAS) show a composition bias toward polar residues. The interval 115–155 (TSRVSKQMVQPPGSQSASRLKKTEIKESSPSPAAAAASQLS) is disordered. A compositionally biased stretch (low complexity) spans 142-152 (SSPSPAAAAAS). A Protein kinase domain is found at 185–485 (FAVSNVIGKG…LCKNSIPPVV (301 aa)). Residues 191–199 (IGKGGYGTV) and lysine 214 contribute to the ATP site. Aspartate 318 (proton acceptor) is an active-site residue.

The protein belongs to the protein kinase superfamily. TKL Ser/Thr protein kinase family. Pelle subfamily. In terms of assembly, interacts with actl-1. In terms of tissue distribution, expressed in the nervous system.

The catalysed reaction is L-seryl-[protein] + ATP = O-phospho-L-seryl-[protein] + ADP + H(+). It catalyses the reaction L-threonyl-[protein] + ATP = O-phospho-L-threonyl-[protein] + ADP + H(+). Functionally, through association with the adapter actl-1, may act downstream of the receptor complex composed of ilcr-1 and ilcr-2, which is a signaling complex that modulates neuronal activity and animal behavior in response to sensory neuron input. The polypeptide is Pelle-like serine/threonine-protein kinase pik-1 (Caenorhabditis elegans).